Here is a 277-residue protein sequence, read N- to C-terminus: Phosphonates import ATP-binding protein PhnC (277 aa).

Positions 3–251 (IKLDKVSARH…RLQALYAQHL (249 aa)) constitute an ABC transporter domain. Position 40-47 (40-47 (GPSGAGKT)) interacts with ATP.

The protein belongs to the ABC transporter superfamily. Phosphonates importer (TC 3.A.1.9.1) family. The complex is composed of two ATP-binding proteins (PhnC), two transmembrane proteins (PhnE) and a solute-binding protein (PhnD).

Its subcellular location is the cell inner membrane. It catalyses the reaction phosphonate(out) + ATP + H2O = phosphonate(in) + ADP + phosphate + H(+). Functionally, part of the ABC transporter complex PhnCDE involved in phosphonates import. Responsible for energy coupling to the transport system. This is Phosphonates import ATP-binding protein PhnC from Polaromonas sp. (strain JS666 / ATCC BAA-500).